The following is a 396-amino-acid chain: Vacuolar protease A (396 aa).

The N-terminal stretch at 1–17 (MKGALLTAAMLLGSAQA) is a signal peptide. Residues 18–70 (GVHTMKLKKVPLAEQLESVPIDVQVQHLGQKYTGLRTESHTQAMFKATDAQVS) constitute a propeptide, activation peptide. Residues 85-392 (YFSEITIGTP…DLGADTVGIA (308 aa)) enclose the Peptidase A1 domain. Asp-103 is an active-site residue. The cysteines at positions 116 and 121 are disulfide-linked. The N-linked (GlcNAc...) asparagine glycan is linked to Asn-138. Residue Asp-284 is part of the active site. The cysteines at positions 318 and 351 are disulfide-linked. N-linked (GlcNAc...) asparagine glycosylation is present at Asn-335.

The protein belongs to the peptidase A1 family.

It localises to the vacuole. The protein is Vacuolar protease A (pep-4) of Neurospora crassa (strain ATCC 24698 / 74-OR23-1A / CBS 708.71 / DSM 1257 / FGSC 987).